Here is a 452-residue protein sequence, read N- to C-terminus: Mitochondrial import inner membrane translocase subunit TIM44 (452 aa).

T128 bears the Phosphothreonine mark. 166-173 (SGEKLGKT) provides a ligand contact to ATP. N6-succinyllysine is present on K177. The residue at position 180 (S180) is a Phosphoserine. The residue at position 217 (K217) is an N6-succinyllysine.

This sequence belongs to the Tim44 family. In terms of assembly, probable component of the PAM complex at least composed of a mitochondrial HSP70 protein, GRPEL1 or GRPEL2, TIMM44, TIMM16/PAM16 and TIMM14/DNAJC19. The complex interacts with the TIMM23 component of the TIM23 complex. Interacts with SLC25A4/ANT1 and SLC25A5/ANT2; leading to inhibit the presequence translocase TIMM23, thereby promoting stabilization of PINK1.

The protein resides in the mitochondrion inner membrane. Its function is as follows. Essential component of the PAM complex, a complex required for the translocation of transit peptide-containing proteins from the inner membrane into the mitochondrial matrix in an ATP-dependent manner. Recruits mitochondrial HSP70 to drive protein translocation into the matrix using ATP as an energy source. The protein is Mitochondrial import inner membrane translocase subunit TIM44 (Timm44) of Mus musculus (Mouse).